A 423-amino-acid chain; its full sequence is N-acylneuraminate cytidylyltransferase B (423 aa).

6 residues coordinate substrate: R30, N40, R88, S97, S99, and Q120. Residue R178 is part of the active site.

Belongs to the CMP-NeuNAc synthase family. Homotetramer.

The protein localises to the cytoplasm. The catalysed reaction is an N-acylneuraminate + CTP = a CMP-N-acyl-beta-neuraminate + diphosphate. It participates in amino-sugar metabolism; N-acetylneuraminate metabolism. Functionally, catalyzes the activation of 2-keto-3-deoxy-D-glycero-D-galacto-nononic acid (KDN) to cytidine 5'-monophosphate 2-keto-3-deoxy-D-glycero-D-galacto-nononic acid (CMP-KDN), a substrate required for the addition of sialic acid. Also has weak activity towards N-acetylneuraminic acid (NeuNAc) and N-glycolylneuraminic acid (Neu5Gc). The sequence is that of N-acylneuraminate cytidylyltransferase B from Danio rerio (Zebrafish).